The primary structure comprises 364 residues: Homeobox protein Nkx-6.1 (364 aa).

A disordered region spans residues 35–134 (LYPATYPPLP…SSSSSASATS (100 aa)). Low complexity-rich tracts occupy residues 48-92 (PSSS…LSAA) and 109-134 (ASGA…SATS). A repressor domain region spans residues 101–268 (LSRPSMPVAS…KYLAGPERAR (168 aa)). Arg-189 bears the Asymmetric dimethylarginine mark. The homeobox DNA-binding region spans 236–295 (RKHTRPTFSGQQIFALEKTFEQTKYLAGPERARLAYSLGMTESQVKVWFQNRRTKWRKKH). Positions 294–364 (KHAAEMATAK…LHASEAEGSS (71 aa)) are disordered. The segment covering 304 to 317 (KKQDSETERLKGTS) has biased composition (basic and acidic residues). The involved in DNA-binding stretch occupies residues 306-364 (QDSETERLKGTSENEEEDDDYNKPLDPNSDDEKITQLLKKHKSSSGGLLLHASEAEGSS).

In terms of tissue distribution, pancreatic beta cells.

It localises to the nucleus. Its function is as follows. Together with NKX2-2 and IRX3 acts to restrict the generation of motor neurons to the appropriate region of the neural tube. Belongs to the class II proteins of neuronal progenitor factors, which are induced by SHH signals. Transcription factor which binds to specific A/T-rich DNA sequences in the promoter regions of a number of genes. Involved in transcriptional regulation in islet beta cells. Binds to the insulin promoter and is involved in regulation of the insulin gene. This chain is Homeobox protein Nkx-6.1 (NKX6-1), found in Mesocricetus auratus (Golden hamster).